The chain runs to 154 residues: Prefoldin subunit alpha (154 aa).

It belongs to the prefoldin alpha subunit family. As to quaternary structure, heterohexamer of two alpha and four beta subunits.

Its subcellular location is the cytoplasm. Functionally, molecular chaperone capable of stabilizing a range of proteins. Seems to fulfill an ATP-independent, HSP70-like function in archaeal de novo protein folding. This Hyperthermus butylicus (strain DSM 5456 / JCM 9403 / PLM1-5) protein is Prefoldin subunit alpha.